A 609-amino-acid polypeptide reads, in one-letter code: UvrABC system protein C (609 aa).

The GIY-YIG domain occupies His-13–Val-91. The UVR domain occupies Gln-201–Val-236.

It belongs to the UvrC family. As to quaternary structure, interacts with UvrB in an incision complex.

Its subcellular location is the cytoplasm. Functionally, the UvrABC repair system catalyzes the recognition and processing of DNA lesions. UvrC both incises the 5' and 3' sides of the lesion. The N-terminal half is responsible for the 3' incision and the C-terminal half is responsible for the 5' incision. This chain is UvrABC system protein C, found in Haemophilus influenzae (strain 86-028NP).